The primary structure comprises 436 residues: UPF0597 protein YhaM (436 aa).

Belongs to the UPF0597 family.

The polypeptide is UPF0597 protein YhaM (Shigella dysenteriae serotype 1 (strain Sd197)).